The primary structure comprises 597 residues: Leukocyte immunoglobulin-like receptor subfamily B member 2 (597 aa).

An N-terminal signal peptide occupies residues 1-21 (MTPIVTVLICLGLSLGPRTRV). Topologically, residues 22–460 (QTGTIPKPTL…QSGLGRHLGV (439 aa)) are extracellular. Ig-like C2-type domains follow at residues 27–110 (PKPT…SELS), 111–229 (DPLV…SLSV), 230–318 (QPGP…ILIT), and 330–419 (QPGP…LVVS). Disulfide bonds link Cys49/Cys98, Cys144/Cys196, Cys156/Cys166, and Cys245/Cys296. N-linked (GlcNAc...) asparagine glycans are attached at residues Asn280, Asn301, and Asn340. Cys345 and Cys396 are oxidised to a cystine. The segment at 417-451 (VVSGPSMGSSPPPTGPISTPGPEDQPLTPTGSDPQ) is disordered. Residues 461 to 481 (VIGILVAVVLLLLLLLLLFLI) form a helical membrane-spanning segment. The Cytoplasmic portion of the chain corresponds to 482-597 (LRHRRQGKHW…PSIYATLAIH (116 aa)). The disordered stretch occupies residues 491-523 (WTSTQRKADFQHPAGAVGPEPTDRGLQWRSSPA). Short sequence motifs (ITIM motif) lie at residues 530 to 535 (NLYAAV), 559 to 564 (VTYAQL), and 589 to 594 (SIYATL). A disordered region spans residues 537 to 597 (DTQPEDGVEM…PSIYATLAIH (61 aa)).

As to quaternary structure, binds PTPN6 when phosphorylated. Binds FCGR1A. Interacts with peptide-bound HLA-G-B2M; this interaction is direct. Interacts with peptide-bound HLA-F-B2M; this interaction is direct. Phosphorylated on tyrosine residues. Dephosphorylated by PTPN6. Expressed in monocytes and at lower levels in myeloid and plasmacytoid dendritic cells. Expressed in tolerogenic IL10-producing dendritic cells. Expressed in myeloid-derived suppressor cells during pregnancy. Detected at low levels in natural killer (NK) cells. Expressed in B cells.

The protein resides in the cell membrane. In terms of biological role, receptor for class I MHC antigens. Recognizes a broad spectrum of HLA-A, HLA-B, HLA-C, HLA-G and HLA-F alleles. Involved in the down-regulation of the immune response and the development of tolerance. Recognizes HLA-G in complex with B2M/beta-2 microglobulin and a nonamer self-peptide (peptide-bound HLA-G-B2M) triggering differentiation of type 1 regulatory T cells and myeloid-derived suppressor cells, both of which actively maintain maternal-fetal tolerance. Competes with CD8A for binding to class I MHC antigens. Inhibits FCGR1A-mediated phosphorylation of cellular proteins and mobilization of intracellular calcium ions. This Homo sapiens (Human) protein is Leukocyte immunoglobulin-like receptor subfamily B member 2.